The chain runs to 349 residues: tRNA pseudouridine synthase D (349 aa).

Phe-27 serves as a coordination point for substrate. Asp-80 serves as the catalytic Nucleophile. Asn-129 contributes to the substrate binding site. The region spanning 155–303 is the TRUD domain; the sequence is GVPNYFGAQR…VEAARRAMLL (149 aa). Position 329 (Phe-329) interacts with substrate.

Belongs to the pseudouridine synthase TruD family.

The catalysed reaction is uridine(13) in tRNA = pseudouridine(13) in tRNA. In terms of biological role, responsible for synthesis of pseudouridine from uracil-13 in transfer RNAs. The sequence is that of tRNA pseudouridine synthase D from Shigella boydii serotype 4 (strain Sb227).